Here is a 528-residue protein sequence, read N- to C-terminus: Zinc finger protein 16-like (528 aa).

The segment at 1 to 28 (MSRKRNHCYMETGASSESQGAFVDSAGP) is disordered. Positions 79 to 106 (IRVLKMELREKSDEIELLKAKLESAEKD) form a coiled coil. 2 disordered regions span residues 159–202 (GAAE…TDAE) and 232–293 (FKGD…DRME). A compositionally biased stretch (basic and acidic residues) spans 232-242 (FKGDSETKCED). Over residues 244 to 256 (PPMDEEDENEDSE) the composition is skewed to acidic residues. Basic and acidic residues-rich tracts occupy residues 257 to 270 (EGRG…DHFP) and 278 to 293 (GEDR…DRME). The C2H2-type 1 zinc-finger motif lies at 303–326 (FICPFCGTLCPDSSFLEEHIKLMH). The span at 333-345 (QSTSAGSSSQAEG) shows a compositional bias: low complexity. Positions 333 to 359 (QSTSAGSSSQAEGDSGEAGPASRGARE) are disordered. 4 consecutive C2H2-type zinc fingers follow at residues 366–388 (YECG…QRIH), 394–416 (FVCP…RLSH), 423–445 (FPCP…QRVH), and 451–473 (YACP…MRIH). Residues 479–501 (YTCYQCGRSFRHLGTYKSHRCMP) form a C2H2-type 6; degenerate zinc finger. The interval 502-528 (ATQMPSEHSPPWAQEDKVQTGRLQGYV) is disordered.

Belongs to the krueppel C2H2-type zinc-finger protein family.

Its subcellular location is the nucleus. Its function is as follows. Probable transcription factor. Important for development and migration of oligodendrocyte precursor cells, and normal myelination of axons in the central nervous system (CNS). Functions autonomously in oligodendrocytes to promote CNS myelination. Seems to act in parallel with notch3 during oligodendrocyte development. The sequence is that of Zinc finger protein 16-like from Danio rerio (Zebrafish).